The sequence spans 419 residues: MNQEINNFYIKDQEIFDQIKLEEKRQKESINLIASENFVSQDVLKVQGTILTNKYAEGYPEKRFYNGCQYIDEIEKIAIERATELFKAKYANVQPHSGSQANMAVFQALLNPNDRILGLSLSDGGHLTHGSKMNFSGKYYESYFYGLNSKTETIDYAEVEKIAFAIRPKLIITGYSSYSKIIDFKSFRKIANKVNAYLMADIAHISGLVASGLHPCPLEAQADVVTSTTHKTLRGPRGGLILTNNKEIINKINKAVFPGGQGGPLMHIIAAKAVAFKEALHSDFIKYQKQILKNACFFAENLQKKGYRIISKSTENHLFLVDVKSKNPNFTGKKISDILNKVNIVVNKNVIPFDKETPLITSGIRLGTPAMTTRGFKENEFAKVSDFIDEAITNHNDLNYLNNLKQKVITLSKNFPLKI.

Residues Leu-121 and Gly-125–Leu-127 contribute to the (6S)-5,6,7,8-tetrahydrofolate site. Lys-231 carries the post-translational modification N6-(pyridoxal phosphate)lysine.

The protein belongs to the SHMT family. Homodimer. Pyridoxal 5'-phosphate serves as cofactor.

Its subcellular location is the cytoplasm. It catalyses the reaction (6R)-5,10-methylene-5,6,7,8-tetrahydrofolate + glycine + H2O = (6S)-5,6,7,8-tetrahydrofolate + L-serine. It participates in one-carbon metabolism; tetrahydrofolate interconversion. Its pathway is amino-acid biosynthesis; glycine biosynthesis; glycine from L-serine: step 1/1. Catalyzes the reversible interconversion of serine and glycine with tetrahydrofolate (THF) serving as the one-carbon carrier. This reaction serves as the major source of one-carbon groups required for the biosynthesis of purines, thymidylate, methionine, and other important biomolecules. Also exhibits THF-independent aldolase activity toward beta-hydroxyamino acids, producing glycine and aldehydes, via a retro-aldol mechanism. The chain is Serine hydroxymethyltransferase from Phytoplasma mali (strain AT).